The primary structure comprises 296 residues: Phosphoribosylaminoimidazole-succinocarboxamide synthase (296 aa).

This sequence belongs to the SAICAR synthetase family.

It catalyses the reaction 5-amino-1-(5-phospho-D-ribosyl)imidazole-4-carboxylate + L-aspartate + ATP = (2S)-2-[5-amino-1-(5-phospho-beta-D-ribosyl)imidazole-4-carboxamido]succinate + ADP + phosphate + 2 H(+). The protein operates within purine metabolism; IMP biosynthesis via de novo pathway; 5-amino-1-(5-phospho-D-ribosyl)imidazole-4-carboxamide from 5-amino-1-(5-phospho-D-ribosyl)imidazole-4-carboxylate: step 1/2. This chain is Phosphoribosylaminoimidazole-succinocarboxamide synthase, found in Geobacter sulfurreducens (strain ATCC 51573 / DSM 12127 / PCA).